A 637-amino-acid chain; its full sequence is Phosphomethylpyrimidine synthase (637 aa).

Substrate contacts are provided by residues asparagine 242, methionine 271, tyrosine 300, histidine 336, 356 to 358, 397 to 400, and glutamate 436; these read SRG and DGLR. Histidine 440 lines the Zn(2+) pocket. Substrate is bound at residue tyrosine 463. Residue histidine 504 participates in Zn(2+) binding. The [4Fe-4S] cluster site is built by cysteine 584, cysteine 587, and cysteine 592.

It belongs to the ThiC family. As to quaternary structure, homodimer. [4Fe-4S] cluster serves as cofactor.

The enzyme catalyses 5-amino-1-(5-phospho-beta-D-ribosyl)imidazole + S-adenosyl-L-methionine = 4-amino-2-methyl-5-(phosphooxymethyl)pyrimidine + CO + 5'-deoxyadenosine + formate + L-methionine + 3 H(+). It participates in cofactor biosynthesis; thiamine diphosphate biosynthesis. Catalyzes the synthesis of the hydroxymethylpyrimidine phosphate (HMP-P) moiety of thiamine from aminoimidazole ribotide (AIR) in a radical S-adenosyl-L-methionine (SAM)-dependent reaction. This is Phosphomethylpyrimidine synthase from Herminiimonas arsenicoxydans.